A 1019-amino-acid chain; its full sequence is Probable inorganic carbon transporter subunit DabA 1 (1019 aa).

Positions 491 and 493 each coordinate Zn(2+). Residues 624 to 643 (VPTRLHSPRDEGSAAGGEGQ) are disordered. The Zn(2+) site is built by H676 and C691.

The protein belongs to the inorganic carbon transporter (TC 9.A.2) DabA family. In terms of assembly, forms a complex with DabB. It depends on Zn(2+) as a cofactor.

The protein localises to the cell inner membrane. Functionally, part of an energy-coupled inorganic carbon pump. The protein is Probable inorganic carbon transporter subunit DabA 1 of Sorangium cellulosum (strain So ce56) (Polyangium cellulosum (strain So ce56)).